We begin with the raw amino-acid sequence, 297 residues long: MTNLKAVIPVAGLGMHMLPATKAIPKEMLPIVDKPMIQYIVDEIVAAGIKEILLVTHASKNAVENHFDTSYELESLLEQRVKRQLLAEVQSICPPGVTIMNVRQGEPLGLGHSILCARPAIGDNPFVVVLPDVVIDDASADPLRYNLAAMIARFNETGRSQVLAKRMPGDLSEYSVIQTKEPLDREGKVSRIVEFIEKPDQPQTLDSDIMAVGRYVLSADIWPELERTQPGAWGRIQLTDAIAELAKKQSVDAMLMTGDSYDCGKKMGYMQAFVKYGLRNLKEGAKFRKGIEKLLSE.

This sequence belongs to the UDPGP type 2 family.

It carries out the reaction alpha-D-glucose 1-phosphate + UTP + H(+) = UDP-alpha-D-glucose + diphosphate. Its pathway is carbohydrate metabolism; nucleotide-sugar metabolism. It participates in bacterial outer membrane biogenesis; lipopolysaccharide biosynthesis. This chain is UTP--glucose-1-phosphate uridylyltransferase (galF), found in Escherichia coli O157:H7.